The following is a 568-amino-acid chain: Poly(A) polymerase (568 aa).

ATP is bound by residues 87–89, 99–102, 100–102, D154, K215, Y224, and 233–234; these read YGS, SDID, DID, and GV. D100, D102, and D154 together coordinate Mg(2+). A phosphoserine mark is found at S452 and S550. Residues 525-568 are disordered; the sequence is NEKRPSKKSKRKNLDARHETVKRSKSDAASGDNINGTTAAVDVN. Residues 536–550 are compositionally biased toward basic and acidic residues; that stretch reads KNLDARHETVKRSKS.

This sequence belongs to the poly(A) polymerase family. As to quaternary structure, component of the cleavage and polyadenylation factor (CPF) complex, which is composed of PTI1, SYC1, SSU72, GLC7, MPE1, REF2, PFS2, PTA1, YSH1/BRR5, SWD2, CFT2/YDH1, YTH1, CFT1/YHH1, FIP1 and PAP1. Interacts with FIR1 and RRP6. The cofactor is Mg(2+). Mn(2+) serves as cofactor.

The protein resides in the nucleus. The catalysed reaction is RNA(n) + ATP = RNA(n)-3'-adenine ribonucleotide + diphosphate. Polymerase component of the cleavage and polyadenylation factor (CPF) complex, which plays a key role in polyadenylation-dependent pre-mRNA 3'-end formation and cooperates with cleavage factors including the CFIA complex and NAB4/CFIB. The protein is Poly(A) polymerase (PAP1) of Saccharomyces cerevisiae (strain ATCC 204508 / S288c) (Baker's yeast).